Consider the following 89-residue polypeptide: Small ribosomal subunit protein uS15 (89 aa).

It belongs to the universal ribosomal protein uS15 family. As to quaternary structure, part of the 30S ribosomal subunit. Forms a bridge to the 50S subunit in the 70S ribosome, contacting the 23S rRNA.

Functionally, one of the primary rRNA binding proteins, it binds directly to 16S rRNA where it helps nucleate assembly of the platform of the 30S subunit by binding and bridging several RNA helices of the 16S rRNA. Its function is as follows. Forms an intersubunit bridge (bridge B4) with the 23S rRNA of the 50S subunit in the ribosome. In Brucella abortus (strain S19), this protein is Small ribosomal subunit protein uS15.